A 666-amino-acid polypeptide reads, in one-letter code: MIYKLYFAIALCFSLCFDLCIAESYVLDDKVGLGRTFDGIGGLSGGGATSRLLVNYAEPYRSQILDYLFKPNFGASLHILKVEIGGDAQTTDGTEPSHMHYENDENFFRGYEWWLMREAKKRNPNITLIGLPWAFPGWVGHGKNWPYDFPDITASYVVSWILGAKHYHDLNIDYVGIWNERNFDSKYIKLLRYTLDKSGLERVRIIASDNLWQPITYSLCVDQELADAVDVIGAHYPGTTTVIEALKTQKKLWSSEDYSTFNDEVGGGCWARILNQNYVNGLMTATISWNLVASYYEDLPFGRDGLMTAEEPWTGNYVVESPIWITAHTTQFSQPGWTYLQTVGHLVHGGSYVALTDSNGNLTVVIETMTHDHSVCIRPPLLPFNVTAQNVTFQLKGSFALIKELQVWQSRFDFKTKKPFFFKKLSPLKISDGSFTLSLDVDEVYTLTTISTGLKGTYPDPPTSGPFPKVYFDDFNVANPSFSEAPDFADQTGVFEYYINLTDPGPHVFTLRQVVTQMPVTWATDADQTISVIGDYKWQNLTVTCDVFMETVKTGGVFIAARVDKGGQSVRSAKGVFFWVFADGSYKVTNDLVGKTVLAEGLSGTRAYGWHTLTLTVEGQYATGLLNGYPLWKDAVVLGPKNGWAAIGTHSFELAQFDNFAVEAKL.

The first 22 residues, Met-1 to Ala-22, serve as a signal peptide directing secretion. A substrate-binding site is contributed by Thr-91. Residue Asn-125 is glycosylated (N-linked (GlcNAc...) asparagine). Positions 133 and 179 each coordinate substrate. Glu-180 functions as the Proton donor/acceptor in the catalytic mechanism. Glu-256 serves as the catalytic Nucleophile. An intrachain disulfide couples Cys-269 to Cys-376. N-linked (GlcNAc...) asparagine glycosylation is present at Asn-361. Substrate is bound at residue Arg-378. Residues Asn-385, Asn-390, Asn-500, and Asn-540 are each glycosylated (N-linked (GlcNAc...) asparagine).

This sequence belongs to the glycosyl hydrolase 59 family.

The protein localises to the lysosome. It catalyses the reaction a beta-D-galactosyl-(1&lt;-&gt;1')-N-acylsphing-4-enine + H2O = an N-acylsphing-4-enine + D-galactose. The catalysed reaction is beta-D-galactosyl-(1&lt;-&gt;1)-sphing-4-enine + H2O = sphing-4-enine + D-galactose. It carries out the reaction a D-galactosylceramide + H2O = an N-acyl-sphingoid base + D-galactose. Functionally, hydrolyzes the galactose ester bonds of glycolipids such as galactosylceramide and galactosylsphingosine. This chain is Galactocerebrosidase, found in Salmo salar (Atlantic salmon).